The primary structure comprises 1001 residues: Serine/threonine-protein kinase TAO1 (1001 aa).

A Phosphoserine modification is found at Ser9. Positions 28–281 (FTDLREIGHG…SEELLKHIFV (254 aa)) constitute a Protein kinase domain. Residues 34-42 (IGHGSFGAV) and Lys57 each bind ATP. The active-site Proton acceptor is Asp151. Residues 324-433 (PAVEAQEEEE…QVSRHKSHYR (110 aa)) are disordered. Residues 350 to 373 (SNQSIPSMSISASSQSSSVNSLPD) show a composition bias toward low complexity. 2 stretches are compositionally biased toward basic and acidic residues: residues 375-388 (SDDK…EGDH) and 399-416 (LKPE…RTRA). A phosphoserine mark is found at Ser421 and Ser445. Residues 458 to 651 (SELREQMSGY…QTQKDLEHAM (194 aa)) are a coiled coil. The interval 567 to 587 (KEELNENQSTPKKEKQEWLSK) is disordered. The span at 577-587 (PKKEKQEWLSK) shows a compositional bias: basic and acidic residues. Position 669 is a phosphothreonine (Thr669). The stretch at 754-877 (KAVLKRLKEE…LERQAREIEA (124 aa)) forms a coiled coil. The segment at 911 to 1001 (SHNPTGGPGP…ISNGSHMSYT (91 aa)) is disordered. Phosphoserine is present on Ser965. Residues 975–1001 (GGRTEQGMSRSTSVTSQISNGSHMSYT) are compositionally biased toward polar residues.

The protein belongs to the protein kinase superfamily. STE Ser/Thr protein kinase family. STE20 subfamily. In terms of assembly, self-associates. Interacts with MAP2K3. Interacts with SPRED1. Interacts with TESK1; the interaction inhibits TAOK1 kinase activity. Interacts with MAP3K7. Post-translationally, proteolytically processed by caspase-3 (CASP3). In terms of processing, autophosphorylated. Phosphorylated by ATM in response to DNA damage. Phosphorylated by LRRK2. As to expression, highly expressed in the testis, and to a lower extent also expressed in brain, placenta, colon and skeletal muscle.

It localises to the cytoplasm. It carries out the reaction L-seryl-[protein] + ATP = O-phospho-L-seryl-[protein] + ADP + H(+). The catalysed reaction is L-threonyl-[protein] + ATP = O-phospho-L-threonyl-[protein] + ADP + H(+). With respect to regulation, serine/threonine-protein kinase activity is inhibited by SPRED1. Functionally, serine/threonine-protein kinase involved in various processes such as p38/MAPK14 stress-activated MAPK cascade, DNA damage response and regulation of cytoskeleton stability. Phosphorylates MAP2K3, MAP2K6 and MARK2. Acts as an activator of the p38/MAPK14 stress-activated MAPK cascade by mediating phosphorylation and subsequent activation of the upstream MAP2K3 and MAP2K6 kinases. Involved in G-protein coupled receptor signaling to p38/MAPK14. In response to DNA damage, involved in the G2/M transition DNA damage checkpoint by activating the p38/MAPK14 stress-activated MAPK cascade, probably by mediating phosphorylation of MAP2K3 and MAP2K6. Acts as a regulator of cytoskeleton stability by phosphorylating 'Thr-208' of MARK2, leading to activate MARK2 kinase activity and subsequent phosphorylation and detachment of MAPT/TAU from microtubules. Also acts as a regulator of apoptosis: regulates apoptotic morphological changes, including cell contraction, membrane blebbing and apoptotic bodies formation via activation of the MAPK8/JNK cascade. Plays an essential role in the regulation of neuronal development in the central nervous system. Also plays a role in the regulation of neuronal migration to the cortical plate. The chain is Serine/threonine-protein kinase TAO1 (TAOK1) from Homo sapiens (Human).